Reading from the N-terminus, the 1775-residue chain is Protein TIC 214 (1775 aa).

6 helical membrane-spanning segments follow: residues Ile19–Gly39, Phe68–Leu88, Pro91–His111, Val133–Leu153, Val176–Ile196, and Ile227–Ile247. The interval Lys1491–Ala1512 is disordered.

It belongs to the TIC214 family. In terms of assembly, part of the Tic complex.

The protein localises to the plastid. It localises to the chloroplast inner membrane. Involved in protein precursor import into chloroplasts. May be part of an intermediate translocation complex acting as a protein-conducting channel at the inner envelope. In Lobularia maritima (Sweet alyssum), this protein is Protein TIC 214.